The primary structure comprises 73 residues: ComX pheromone (73 aa).

Positions 1-52 (MKHIDKIISHLVNNPEAFDQFKNGNLTLLNINEKEKKAILYAFEQGEVPRTS) are excised as a propeptide. The 3'-farnesyl-2',N2-cyclotryptophan moiety is linked to residue Trp54. A propeptide spanning residues 59 to 73 (AISNFFEDDKRKSLI) is cleaved from the precursor.

Interacts directly with the sensor histidine kinase ComP and stimulates its activity. In terms of processing, trp-54 is modified by farnesylation, which is essential for activity. Modified by the tryptophan prenyltransferase ComQ before export to the extracellular environment.

It is found in the secreted. Functionally, part of a major quorum-sensing system that regulates the development of genetic competence. Acts through the activation of the two-component regulatory system ComP/ComA composed of a sensor histidine kinase, ComP, and a response regulator, ComA. Activates the expression of the genes for biosynthesis of poly-gamma-glutamic acid (gamma-PGA), which is involved in biofilm formation in B.subtilis natto. The protein is ComX pheromone of Bacillus subtilis subsp. natto (strain BEST195).